Consider the following 669-residue polypeptide: UvrABC system protein B (669 aa).

Residues 26 to 414 enclose the Helicase ATP-binding domain; the sequence is EGLEDGLAHQ…SGDVVEQVVR (389 aa). An ATP-binding site is contributed by 39-46; sequence GVTGSGKT. The short motif at 92–115 is the Beta-hairpin element; it reads YYDYYQPEAYVPSSDTFIEKDASV. Residues 431 to 597 enclose the Helicase C-terminal domain; the sequence is QVDDLLSEIR…GLNKKINDIL (167 aa). The region spanning 629–664 is the UVR domain; it reads ESKIRELEAKMYQHAQDLEFEQAASVRDQVQALREQ.

It belongs to the UvrB family. As to quaternary structure, forms a heterotetramer with UvrA during the search for lesions. Interacts with UvrC in an incision complex.

The protein resides in the cytoplasm. Functionally, the UvrABC repair system catalyzes the recognition and processing of DNA lesions. A damage recognition complex composed of 2 UvrA and 2 UvrB subunits scans DNA for abnormalities. Upon binding of the UvrA(2)B(2) complex to a putative damaged site, the DNA wraps around one UvrB monomer. DNA wrap is dependent on ATP binding by UvrB and probably causes local melting of the DNA helix, facilitating insertion of UvrB beta-hairpin between the DNA strands. Then UvrB probes one DNA strand for the presence of a lesion. If a lesion is found the UvrA subunits dissociate and the UvrB-DNA preincision complex is formed. This complex is subsequently bound by UvrC and the second UvrB is released. If no lesion is found, the DNA wraps around the other UvrB subunit that will check the other stand for damage. This Photorhabdus laumondii subsp. laumondii (strain DSM 15139 / CIP 105565 / TT01) (Photorhabdus luminescens subsp. laumondii) protein is UvrABC system protein B.